The sequence spans 361 residues: Nicotinate-nucleotide--dimethylbenzimidazole phosphoribosyltransferase (361 aa).

Glutamate 314 serves as the catalytic Proton acceptor.

This sequence belongs to the CobT family.

The catalysed reaction is 5,6-dimethylbenzimidazole + nicotinate beta-D-ribonucleotide = alpha-ribazole 5'-phosphate + nicotinate + H(+). Its pathway is nucleoside biosynthesis; alpha-ribazole biosynthesis; alpha-ribazole from 5,6-dimethylbenzimidazole: step 1/2. Catalyzes the synthesis of alpha-ribazole-5'-phosphate from nicotinate mononucleotide (NAMN) and 5,6-dimethylbenzimidazole (DMB). This Mycobacterium bovis (strain BCG / Pasteur 1173P2) protein is Nicotinate-nucleotide--dimethylbenzimidazole phosphoribosyltransferase.